Reading from the N-terminus, the 115-residue chain is Nucleoid-associated protein Rpic_1036 (115 aa).

This sequence belongs to the YbaB/EbfC family. As to quaternary structure, homodimer.

The protein localises to the cytoplasm. It is found in the nucleoid. Functionally, binds to DNA and alters its conformation. May be involved in regulation of gene expression, nucleoid organization and DNA protection. The sequence is that of Nucleoid-associated protein Rpic_1036 from Ralstonia pickettii (strain 12J).